A 345-amino-acid chain; its full sequence is Platelet-derived growth factor C (345 aa).

A signal peptide spans 1–22; it reads MSLFGLLLLTSALAGQRQGTQA. Asn-25 and Asn-55 each carry an N-linked (GlcNAc...) asparagine glycan. Positions 46-163 constitute a CUB domain; sequence HERIITVSTN…PGFCIHYNIV (118 aa). Cystine bridges form between Cys-104–Cys-124, Cys-250–Cys-294, Cys-280–Cys-335, and Cys-287–Cys-337.

The protein belongs to the PDGF/VEGF growth factor family. In terms of assembly, homodimer; disulfide-linked. Interacts with PDGFRA homodimers, and with heterodimers formed by PDGFRA and PDGFRB. Interacts (via CUB domain) with PLAT (via kringle domain). Post-translationally, proteolytic removal of the N-terminal CUB domain releasing the core domain is necessary for unmasking the receptor-binding epitopes of the core domain. Cleavage after basic residues in the hinge region (region connecting the CUB and growth factor domains) gives rise to the receptor-binding form. Cleaved by PLAT and PLG. In terms of processing, sumoylated with SUMO1. N-glycosylated. In terms of tissue distribution, expressed in the fallopian tube, vascular smooth muscle cells in kidney, breast and colon and in visceral smooth muscle of the gastrointestinal tract. Highly expressed in retinal pigment epithelia. Expressed in medulloblastoma. In the kidney, constitutively expressed in parietal epithelial cells of Bowman's capsule, tubular epithelial cells and in arterial endothelial cells (at protein level). Highly expressed in the platelets, prostate, testis and uterus. Higher expression is observed in uterine leiomyomata. Weaker expression in the spleen, thymus, heart, pancreas, liver, ovary cells and small intestine, and negligible expression in the colon and peripheral blood leukocytes.

Its subcellular location is the cytoplasm. It is found in the cytosol. The protein resides in the secreted. It localises to the nucleus. The protein localises to the cytoplasmic granule. Its subcellular location is the cell membrane. Functionally, growth factor that plays an essential role in the regulation of embryonic development, cell proliferation, cell migration, survival and chemotaxis. Potent mitogen and chemoattractant for cells of mesenchymal origin. Required for normal skeleton formation during embryonic development, especially for normal development of the craniofacial skeleton and for normal development of the palate. Required for normal skin morphogenesis during embryonic development. Plays an important role in wound healing, where it appears to be involved in three stages: inflammation, proliferation and remodeling. Plays an important role in angiogenesis and blood vessel development. Involved in fibrotic processes, in which transformation of interstitial fibroblasts into myofibroblasts plus collagen deposition occurs. The CUB domain has mitogenic activity in coronary artery smooth muscle cells, suggesting a role beyond the maintenance of the latency of the PDGF domain. In the nucleus, PDGFC seems to have additional function. The sequence is that of Platelet-derived growth factor C (PDGFC) from Homo sapiens (Human).